The chain runs to 183 residues: MTGRGTSSRFLTSVLHNGLGRYVQQLQRLSLSLSRDAPSSRGAREFVEREVTDFARRNPGVVVYVNPRPCAMPRIVAEYLNGAVREENVNSKSVEEIKSLVQKLADQSGLDVIRIRKPFHTDNPSIQGQWTPSPTNGLPSTGCGPENSGILLQLRCKHSKEPGALDRERDRIGSSFGFQAQAE.

2 disordered regions span residues 120–144 (HTDN…TGCG) and 162–183 (PGAL…AQAE). A compositionally biased stretch (polar residues) spans 122–139 (DNPSIQGQWTPSPTNGLP). Basic and acidic residues predominate over residues 162–172 (PGALDRERDRI).

The protein belongs to the mitochondrion-specific ribosomal protein mL43 family. Component of the mitochondrial ribosome large subunit (39S) which comprises a 16S rRNA and about 50 distinct proteins. As to expression, ubiquitous with the highest levels in the liver, heart and kidneys. The skeletal muscle, brain and testis showed lower but detectable expression. Expression is coregulated with TWNK.

Its subcellular location is the mitochondrion. The chain is Large ribosomal subunit protein mL43 (Mrpl43) from Mus musculus (Mouse).